Here is a 458-residue protein sequence, read N- to C-terminus: MALWGGRFKQEADAKFKFFNDSLRFDYRLALQDIDGSIGWAKAITSVGILTEQEHQQLVVALKELRAEIEPNIAIILRDDAEDIHSWVESKLIEKVGDLGKKLHTGRSRNDQVAVDMKMWCKVQAVVLQERIRNLQHKLVETAEANQNAVMPGYTHLQRAQPITFAHWCMAYYEMLERDFSRLTDAYKRMHTCPLGSGALAGTAYSIDRDALAQDLGFAIGTRNSLDSVSDRDHVLELLSTASISMVHLSRFAEDLIFFNSGESAFLELSDRVTSGSSLMPQKKNPDACELIRGKSGRVFGALSGLLTTLKGLPLAYNKDMQEDKEGIFDAMETWQACLEIGALVLEDINVNVERTREAAQQGYSNATELADYLVAKGIPFREAHHIVGEAVVYAISKREPLEALSVAEFKQFHPVIDEDVYPILSLESCLEKRSAKGGVNPERVREAIEAAKVNLGA.

Belongs to the lyase 1 family. Argininosuccinate lyase subfamily.

It localises to the cytoplasm. The enzyme catalyses 2-(N(omega)-L-arginino)succinate = fumarate + L-arginine. Its pathway is amino-acid biosynthesis; L-arginine biosynthesis; L-arginine from L-ornithine and carbamoyl phosphate: step 3/3. The polypeptide is Argininosuccinate lyase (Actinobacillus pleuropneumoniae serotype 3 (strain JL03)).